The following is a 279-amino-acid chain: Dermonecrotic toxin StSicTox-betaIB1i (279 aa).

The active site involves His-12. Residues Glu-32 and Asp-34 each coordinate Mg(2+). His-48 serves as the catalytic Nucleophile. Disulfide bonds link Cys-52–Cys-58 and Cys-54–Cys-198. Asp-92 serves as a coordination point for Mg(2+).

Belongs to the arthropod phospholipase D family. Class II subfamily. Class IIb sub-subfamily. Mg(2+) is required as a cofactor. Expressed by the venom gland.

It localises to the secreted. The enzyme catalyses an N-(acyl)-sphingosylphosphocholine = an N-(acyl)-sphingosyl-1,3-cyclic phosphate + choline. It carries out the reaction N-hexanoyl-sphing-4-enine-1-phosphocholine = N-(hexanoyl)-sphing-4-enine-1,3-cyclic phosphate + choline. It catalyses the reaction an N-(acyl)-sphingosylphosphoethanolamine = an N-(acyl)-sphingosyl-1,3-cyclic phosphate + ethanolamine. The catalysed reaction is N-dodecanoyl-heptadecasphing-4-enine-1-phosphoethanolamine = N-dodecanoyl-heptadecasphing-4-enine-1,3-cyclic phosphate + ethanolamine. The enzyme catalyses a 1-acyl-sn-glycero-3-phosphoethanolamine = a 1-acyl-sn-glycero-2,3-cyclic phosphate + ethanolamine. It carries out the reaction 1-tetradecanoyl-sn-glycero-3-phosphoethanolamine = 1-tetradecanoyl-sn-glycero-2,3-cyclic phosphate + ethanolamine. In terms of biological role, dermonecrotic toxins cleave the phosphodiester linkage between the phosphate and headgroup of certain phospholipids (sphingolipid and lysolipid substrates), forming an alcohol (often choline) and a cyclic phosphate. This toxin acts on lysophosphatidylethanolamine (LPE) and ceramide phosphoethanolamine (CPE) with high activity. This toxin acts on sphingomyelin (SM) with very low activity and is not active on lysophosphatidylserine (LPS), lysophosphatidylcholine (LPC) and lysophosphatidylglycerol (LPG). It acts by transphosphatidylation, releasing exclusively cyclic phosphate as second products. It is not surprising that spider toxins have affinity for ethanolamine-containing sphingolipids since they are common in insect prey. Induces dermonecrosis, hemolysis, increased vascular permeability, edema, inflammatory response, and platelet aggregation. The protein is Dermonecrotic toxin StSicTox-betaIB1i of Sicarius terrosus (Cave spider).